The following is a 287-amino-acid chain: Bifunctional protein FolD (287 aa).

NADP(+) is bound by residues 167 to 169 (GRS) and threonine 192.

The protein belongs to the tetrahydrofolate dehydrogenase/cyclohydrolase family. As to quaternary structure, homodimer.

It carries out the reaction (6R)-5,10-methylene-5,6,7,8-tetrahydrofolate + NADP(+) = (6R)-5,10-methenyltetrahydrofolate + NADPH. It catalyses the reaction (6R)-5,10-methenyltetrahydrofolate + H2O = (6R)-10-formyltetrahydrofolate + H(+). The protein operates within one-carbon metabolism; tetrahydrofolate interconversion. Catalyzes the oxidation of 5,10-methylenetetrahydrofolate to 5,10-methenyltetrahydrofolate and then the hydrolysis of 5,10-methenyltetrahydrofolate to 10-formyltetrahydrofolate. This is Bifunctional protein FolD from Sorangium cellulosum (strain So ce56) (Polyangium cellulosum (strain So ce56)).